A 1946-amino-acid chain; its full sequence is 1,3-beta-glucan synthase component (1946 aa).

2 disordered regions span residues 1–127 and 152–198; these read MSGY…FSDF and YGEG…KEPY. 3 stretches are compositionally biased toward low complexity: residues 24–34, 43–60, and 91–109; these read GYYQDDQYYDQ, GDHA…QGDG, and DDYY…NQGY. Residues 165–180 show a composition bias toward polar residues; the sequence is QLSYGGNRSSGASTPN. N-linked (GlcNAc...) asparagine glycosylation is found at Asn171 and Asn290. A disordered region spans residues 297–316; it reads KRKAKKGKKKGGEAGNEAET. 6 helical membrane-spanning segments follow: residues 489–509, 537–557, 576–596, 618–638, 675–695, and 734–754; these read WFHL…MFWF, FSIV…ATLA, LLFL…VFMF, IGIV…VMPL, FGLW…YLTL, and IVLI…TYLF. Asn1017 and Asn1312 each carry an N-linked (GlcNAc...) asparagine glycan. A run of 5 helical transmembrane segments spans residues 1356-1376, 1413-1433, 1500-1520, 1523-1543, and 1615-1635; these read NMFI…IGAL, CIIS…VQEL, FAGQ…FATS, WQPA…SPFL, and IFLT…VAYL. A glycan (N-linked (GlcNAc...) asparagine) is linked at Asn1649. Helical transmembrane passes span 1667 to 1687, 1703 to 1723, 1738 to 1758, 1803 to 1823, and 1864 to 1884; these read LAVV…AMFG, FGPV…IIFF, LAGI…IVSL, FSAD…LILI, and AILY…PGVI. N-linked (GlcNAc...) asparagine glycosylation occurs at Asn1918. The segment at 1920-1946 is disordered; sequence TEGKTETGTKAGGADASATDASKLRLF. Positions 1925–1940 are enriched in low complexity; that stretch reads ETGTKAGGADASATDA.

It belongs to the glycosyltransferase 48 family. Component of the 1,3-beta-glucan synthase (GS) complex composed of a catalytic subunit GLS1 and a regulatory subunit RHO1.

It is found in the membrane. The protein resides in the cell membrane. The catalysed reaction is [(1-&gt;3)-beta-D-glucosyl](n) + UDP-alpha-D-glucose = [(1-&gt;3)-beta-D-glucosyl](n+1) + UDP + H(+). Activated by iron ions. Inhibited by manganese, copper and zinc ions. Catalytic subunit of the 1,3-beta-glucan synthase (GS). Synthesizes 1,3-beta-glucan, a major structural component of the fungal cell wall. Involved in cell wall synthesis, maintenance and remodeling. This Cordyceps militaris (strain CM01) (Caterpillar fungus) protein is 1,3-beta-glucan synthase component.